Consider the following 661-residue polypeptide: Peroxisomal acyl-coenzyme A oxidase 1 (661 aa).

S26 carries the phosphoserine modification. At K65 the chain carries N6-acetyllysine. An N6-succinyllysine mark is found at K89 and K90. T139 is an FAD binding site. K159 is modified (N6-succinyllysine). G178 is an FAD binding site. K216 is modified (N6-acetyllysine). The residue at position 241 (K241) is an N6-succinyllysine. N6-acetyllysine is present on residues K255, K267, and K272. K349 bears the N6-succinyllysine mark. The active-site Proton acceptor is the E421. 2 positions are modified to N6-acetyllysine; alternate: K437 and K446. 2 positions are modified to N6-succinyllysine; alternate: K437 and K446. K500 is subject to N6-acetyllysine. K512 bears the N6-acetyllysine; alternate mark. N6-succinyllysine; alternate is present on K512. K542 is modified (N6-succinyllysine). Position 637 is an N6-acetyllysine; alternate (K637). K637 carries the N6-succinyllysine; alternate modification. K643 carries the post-translational modification N6-succinyllysine. S649 carries the phosphoserine modification. K652 bears the N6-acetyllysine mark. The residue at position 655 (K655) is an N6-succinyllysine. Residues 659-661 (SKL) carry the Microbody targeting signal motif.

It belongs to the acyl-CoA oxidase family. In terms of assembly, homodimer. The enzyme contains three components A, B and C, the latter two being produced from the first by a proteolytic cleavage. Interacts with LONP2. FAD serves as cofactor. As to expression, expressed in Schwann cells. Expressed (at protein level) in liver.

It localises to the peroxisome. It catalyses the reaction a 2,3-saturated acyl-CoA + O2 = a (2E)-enoyl-CoA + H2O2. It carries out the reaction hexadecanoyl-CoA + O2 = (2E)-hexadecenoyl-CoA + H2O2. The catalysed reaction is dodecanoyl-CoA + O2 = (2E)-dodecenoyl-CoA + H2O2. The enzyme catalyses octanoyl-CoA + O2 = (2E)-octenoyl-CoA + H2O2. It catalyses the reaction decanoyl-CoA + O2 = (2E)-decenoyl-CoA + H2O2. It carries out the reaction tetradecanoyl-CoA + O2 = (2E)-tetradecenoyl-CoA + H2O2. The catalysed reaction is hexadecanedioyl-CoA + O2 = (2E)-hexadecenedioyl-CoA + H2O2. The enzyme catalyses tetracosanoyl-CoA + O2 = (2E)-tetracosenoyl-CoA + H2O2. It catalyses the reaction glutaryl-CoA + O2 = (2E)-glutaconyl-CoA + H2O2. It carries out the reaction hexanoyl-CoA + O2 = (2E)-hexenoyl-CoA + H2O2. The catalysed reaction is octadecanoyl-CoA + O2 = (2E)-octadecenoyl-CoA + H2O2. The enzyme catalyses (5Z,8Z,11Z,14Z,17Z)-eicosapentaenoyl-CoA + O2 = (2E,5Z,8Z,11Z,14Z,17Z)-icosahexaenoyl-CoA + H2O2. It catalyses the reaction (6Z,9Z,12Z,15Z,18Z,21Z)-tetracosahexaenoyl-CoA + O2 = (2E,6Z,9Z,12Z,15Z,18Z,21Z)-tetracosaheptaenoyl-CoA + H2O2. The protein operates within lipid metabolism; peroxisomal fatty acid beta-oxidation. Involved in the initial and rate-limiting step of peroxisomal beta-oxidation of straight-chain saturated and unsaturated very-long-chain fatty acids. Catalyzes the desaturation of fatty acyl-CoAs such as palmitoyl-CoA (hexadecanoyl-CoA) to 2-trans-enoyl-CoAs ((2E)-enoyl-CoAs) such as (2E)-hexadecenoyl-CoA, and donates electrons directly to molecular oxygen (O(2)), thereby producing hydrogen peroxide (H(2)O(2)). Its function is as follows. Shows highest activity against medium-chain fatty acyl-CoAs. Shows optimum activity with a chain length of 10 carbons (decanoyl-CoA) in vitro. In terms of biological role, is active against a much broader range of substrates and shows activity towards long-chain acyl-CoAs. The protein is Peroxisomal acyl-coenzyme A oxidase 1 of Rattus norvegicus (Rat).